Here is a 418-residue protein sequence, read N- to C-terminus: tRNA(Met) cytidine acetate ligase (418 aa).

Residues Gly-95, Asn-161, and Arg-186 each coordinate ATP.

Belongs to the TmcAL family.

Its subcellular location is the cytoplasm. The catalysed reaction is cytidine(34) in elongator tRNA(Met) + acetate + ATP = N(4)-acetylcytidine(34) in elongator tRNA(Met) + AMP + diphosphate. Its function is as follows. Catalyzes the formation of N(4)-acetylcytidine (ac(4)C) at the wobble position of elongator tRNA(Met), using acetate and ATP as substrates. First activates an acetate ion to form acetyladenylate (Ac-AMP) and then transfers the acetyl group to tRNA to form ac(4)C34. In Thermotoga petrophila (strain ATCC BAA-488 / DSM 13995 / JCM 10881 / RKU-1), this protein is tRNA(Met) cytidine acetate ligase.